A 202-amino-acid chain; its full sequence is MFRRTYFWLMLLPLFMVGCTGLPDHPTSVEWQSHQAKLSQIQSFQAVGKLGYISPDQRQNLNFYWKHSPEQSNLRFTTFLGQTALNLTMTPQGARVETYDDQILTAANATALVQQLTGLVIPVEQLSDWIIGLPNGADDFQLNEQNTLSSLEKDLNFQRWHIAYTQYRDVEFHQQVVPLPAKLSLTQQDIKLNIVVSKWTLK.

Residues 1 to 18 form the signal peptide; that stretch reads MFRRTYFWLMLLPLFMVG. The N-palmitoyl cysteine moiety is linked to residue Cys-19. Residue Cys-19 is the site of S-diacylglycerol cysteine attachment.

This sequence belongs to the LolB family. Monomer.

Its subcellular location is the cell outer membrane. In terms of biological role, plays a critical role in the incorporation of lipoproteins in the outer membrane after they are released by the LolA protein. This chain is Outer-membrane lipoprotein LolB, found in Vibrio vulnificus (strain YJ016).